Reading from the N-terminus, the 556-residue chain is 2-succinyl-5-enolpyruvyl-6-hydroxy-3-cyclohexene-1-carboxylate synthase (556 aa).

It belongs to the TPP enzyme family. MenD subfamily. Homodimer. Requires Mg(2+) as cofactor. The cofactor is Mn(2+). It depends on thiamine diphosphate as a cofactor.

The enzyme catalyses isochorismate + 2-oxoglutarate + H(+) = 5-enolpyruvoyl-6-hydroxy-2-succinyl-cyclohex-3-ene-1-carboxylate + CO2. It participates in quinol/quinone metabolism; 1,4-dihydroxy-2-naphthoate biosynthesis; 1,4-dihydroxy-2-naphthoate from chorismate: step 2/7. It functions in the pathway quinol/quinone metabolism; menaquinone biosynthesis. Its function is as follows. Catalyzes the thiamine diphosphate-dependent decarboxylation of 2-oxoglutarate and the subsequent addition of the resulting succinic semialdehyde-thiamine pyrophosphate anion to isochorismate to yield 2-succinyl-5-enolpyruvyl-6-hydroxy-3-cyclohexene-1-carboxylate (SEPHCHC). This is 2-succinyl-5-enolpyruvyl-6-hydroxy-3-cyclohexene-1-carboxylate synthase from Klebsiella pneumoniae subsp. pneumoniae (strain ATCC 700721 / MGH 78578).